Reading from the N-terminus, the 365-residue chain is MIKFLSALILLLVTTAAQAERIRDLTSVQGVRQNSLIGYGLVVGLDGTGDQTTQTPFTTQTLNNMLSQLGITVPTGTNMQLKNVAAVMVTASLPPFGRQGQTIDVVVSSMGNAKSLRGGTLLMTPLKGVDSQVYALAQGNILVGGAGASAGGSSVQVNQLNGGRITNGAVIERELPSQFGVGNTLNLQLNDEDFSMAQQIADTINRVRGYGSATALDARAIQVRVPSGNSSQVRFLADIQNMQVNVTPQDAKVVINSRTGSVVMNREVTLDSCAVAQGNLSVTVNRQANVSQPDTPFGGGQTVVTPQTQIDLRQSGGSLQSVRSSASLNNVVRALNALGATPIDLMSILQSMQSAGCLRAKLEII.

The signal sequence occupies residues 1 to 19; the sequence is MIKFLSALILLLVTTAAQA.

The protein belongs to the FlgI family. In terms of assembly, the basal body constitutes a major portion of the flagellar organelle and consists of four rings (L,P,S, and M) mounted on a central rod.

The protein resides in the periplasm. It is found in the bacterial flagellum basal body. Functionally, assembles around the rod to form the L-ring and probably protects the motor/basal body from shearing forces during rotation. The polypeptide is Flagellar P-ring protein (Shigella flexneri serotype 5b (strain 8401)).